The chain runs to 276 residues: Methylesterase 17 (276 aa).

An AB hydrolase-1 domain is found at 19-138 (PHFVLIHGMS…TDEDMKDGVP (120 aa)). The active-site Acyl-ester intermediate is serine 95. Active-site charge relay system residues include aspartate 225 and histidine 252.

It belongs to the AB hydrolase superfamily. Methylesterase family. Expressed in several tissues of seedlings and adult plants, with a higher relative level of expression in the seedling shoot apex and the adult stem.

It carries out the reaction methyl (indol-3-yl)acetate + H2O = (indol-3-yl)acetate + methanol + H(+). It participates in plant hormone biosynthesis. Its function is as follows. Methylesterase that efficiently and specifically hydrolyzes methyl indole-3-acetic acid (MeIAA) to IAA (auxin). MeIAA is believed to be an inactive form of auxin that needs to be demethylated to exert a biological effect. The chain is Methylesterase 17 from Arabidopsis thaliana (Mouse-ear cress).